Consider the following 466-residue polypeptide: tRNA(Ile)-lysidine synthase (466 aa).

Residue 26–31 coordinates ATP; the sequence is SGGSDS.

The protein belongs to the tRNA(Ile)-lysidine synthase family.

The protein resides in the cytoplasm. It catalyses the reaction cytidine(34) in tRNA(Ile2) + L-lysine + ATP = lysidine(34) in tRNA(Ile2) + AMP + diphosphate + H(+). Functionally, ligates lysine onto the cytidine present at position 34 of the AUA codon-specific tRNA(Ile) that contains the anticodon CAU, in an ATP-dependent manner. Cytidine is converted to lysidine, thus changing the amino acid specificity of the tRNA from methionine to isoleucine. This chain is tRNA(Ile)-lysidine synthase, found in Oceanobacillus iheyensis (strain DSM 14371 / CIP 107618 / JCM 11309 / KCTC 3954 / HTE831).